Consider the following 378-residue polypeptide: UDP-N-acetylglucosamine 2-epimerase (378 aa).

Residue His-214 is part of the active site.

This sequence belongs to the UDP-N-acetylglucosamine 2-epimerase family.

The catalysed reaction is UDP-N-acetyl-alpha-D-glucosamine = UDP-N-acetyl-alpha-D-mannosamine. The protein operates within bacterial outer membrane biogenesis; LPS O-antigen biosynthesis. The chain is UDP-N-acetylglucosamine 2-epimerase (rfbC) from Salmonella borreze.